A 114-amino-acid chain; its full sequence is Iron-sulfur cluster insertion protein ErpA (114 aa).

Iron-sulfur cluster-binding residues include C42, C106, and C108.

This sequence belongs to the HesB/IscA family. In terms of assembly, homodimer. Iron-sulfur cluster is required as a cofactor.

Its function is as follows. Required for insertion of 4Fe-4S clusters for at least IspG. This Yersinia enterocolitica serotype O:8 / biotype 1B (strain NCTC 13174 / 8081) protein is Iron-sulfur cluster insertion protein ErpA.